A 340-amino-acid polypeptide reads, in one-letter code: Uroporphyrinogen decarboxylase (340 aa).

Residues 23 to 27, Asp72, Tyr147, Thr202, and His316 contribute to the substrate site; that span reads RQAGR.

The protein belongs to the uroporphyrinogen decarboxylase family. Homodimer.

Its subcellular location is the cytoplasm. It catalyses the reaction uroporphyrinogen III + 4 H(+) = coproporphyrinogen III + 4 CO2. Its pathway is porphyrin-containing compound metabolism; protoporphyrin-IX biosynthesis; coproporphyrinogen-III from 5-aminolevulinate: step 4/4. Catalyzes the decarboxylation of four acetate groups of uroporphyrinogen-III to yield coproporphyrinogen-III. The protein is Uroporphyrinogen decarboxylase of Trichlorobacter lovleyi (strain ATCC BAA-1151 / DSM 17278 / SZ) (Geobacter lovleyi).